The chain runs to 101 residues: MSINALLYVLSLALLIWTGSVVTLLLLLFFCLFLLFFSLHFFCFTREHVHYTLPPKCHSLKFQFDSIPSSSLSLSPFPFLFFPRLRAVAFASPTLSFFFPI.

The signal sequence occupies residues 1–18 (MSINALLYVLSLALLIWT). Residues 62-82 (FQFDSIPSSSLSLSPFPFLFF) form a helical membrane-spanning segment.

It is found in the membrane. This is an uncharacterized protein from Saccharomyces cerevisiae (strain ATCC 204508 / S288c) (Baker's yeast).